A 397-amino-acid polypeptide reads, in one-letter code: Tryptophan synthase beta chain (397 aa).

K90 is modified (N6-(pyridoxal phosphate)lysine).

The protein belongs to the TrpB family. Tetramer of two alpha and two beta chains. It depends on pyridoxal 5'-phosphate as a cofactor.

It catalyses the reaction (1S,2R)-1-C-(indol-3-yl)glycerol 3-phosphate + L-serine = D-glyceraldehyde 3-phosphate + L-tryptophan + H2O. It functions in the pathway amino-acid biosynthesis; L-tryptophan biosynthesis; L-tryptophan from chorismate: step 5/5. Functionally, the beta subunit is responsible for the synthesis of L-tryptophan from indole and L-serine. This is Tryptophan synthase beta chain from Nitrosomonas europaea (strain ATCC 19718 / CIP 103999 / KCTC 2705 / NBRC 14298).